Consider the following 676-residue polypeptide: DNA ligase (676 aa).

NAD(+) contacts are provided by residues 35 to 39 (DAVYD), 84 to 85 (SL), and glutamate 115. Residue lysine 117 is the N6-AMP-lysine intermediate of the active site. 4 residues coordinate NAD(+): arginine 138, glutamate 177, lysine 296, and lysine 320. 4 residues coordinate Zn(2+): cysteine 414, cysteine 417, cysteine 432, and cysteine 437. The BRCT domain maps to 599–676 (NANLKLVGKT…SEAELLKILA (78 aa)).

Belongs to the NAD-dependent DNA ligase family. LigA subfamily. The cofactor is Mg(2+). Mn(2+) is required as a cofactor.

The enzyme catalyses NAD(+) + (deoxyribonucleotide)n-3'-hydroxyl + 5'-phospho-(deoxyribonucleotide)m = (deoxyribonucleotide)n+m + AMP + beta-nicotinamide D-nucleotide.. Its function is as follows. DNA ligase that catalyzes the formation of phosphodiester linkages between 5'-phosphoryl and 3'-hydroxyl groups in double-stranded DNA using NAD as a coenzyme and as the energy source for the reaction. It is essential for DNA replication and repair of damaged DNA. The protein is DNA ligase of Trichormus variabilis (strain ATCC 29413 / PCC 7937) (Anabaena variabilis).